The following is a 106-amino-acid chain: Large ribosomal subunit protein uL24 (106 aa).

The protein belongs to the universal ribosomal protein uL24 family. Part of the 50S ribosomal subunit.

In terms of biological role, one of two assembly initiator proteins, it binds directly to the 5'-end of the 23S rRNA, where it nucleates assembly of the 50S subunit. One of the proteins that surrounds the polypeptide exit tunnel on the outside of the subunit. The sequence is that of Large ribosomal subunit protein uL24 from Bordetella avium (strain 197N).